The chain runs to 179 residues: Crossover junction endodeoxyribonuclease RuvC (179 aa).

Active-site residues include Asp7, Glu67, and Asp140. Mg(2+)-binding residues include Asp7, Glu67, and Asp140.

It belongs to the RuvC family. As to quaternary structure, homodimer which binds Holliday junction (HJ) DNA. The HJ becomes 2-fold symmetrical on binding to RuvC with unstacked arms; it has a different conformation from HJ DNA in complex with RuvA. In the full resolvosome a probable DNA-RuvA(4)-RuvB(12)-RuvC(2) complex forms which resolves the HJ. The cofactor is Mg(2+).

The protein resides in the cytoplasm. The enzyme catalyses Endonucleolytic cleavage at a junction such as a reciprocal single-stranded crossover between two homologous DNA duplexes (Holliday junction).. The RuvA-RuvB-RuvC complex processes Holliday junction (HJ) DNA during genetic recombination and DNA repair. Endonuclease that resolves HJ intermediates. Cleaves cruciform DNA by making single-stranded nicks across the HJ at symmetrical positions within the homologous arms, yielding a 5'-phosphate and a 3'-hydroxyl group; requires a central core of homology in the junction. The consensus cleavage sequence is 5'-(A/T)TT(C/G)-3'. Cleavage occurs on the 3'-side of the TT dinucleotide at the point of strand exchange. HJ branch migration catalyzed by RuvA-RuvB allows RuvC to scan DNA until it finds its consensus sequence, where it cleaves and resolves the cruciform DNA. This is Crossover junction endodeoxyribonuclease RuvC from Salinibacter ruber (strain DSM 13855 / M31).